The sequence spans 382 residues: Histidinol-phosphate aminotransferase (382 aa).

Lys215 bears the N6-(pyridoxal phosphate)lysine mark. The tract at residues Asn363–Ile382 is disordered.

This sequence belongs to the class-II pyridoxal-phosphate-dependent aminotransferase family. Histidinol-phosphate aminotransferase subfamily. In terms of assembly, homodimer. Requires pyridoxal 5'-phosphate as cofactor.

It catalyses the reaction L-histidinol phosphate + 2-oxoglutarate = 3-(imidazol-4-yl)-2-oxopropyl phosphate + L-glutamate. It functions in the pathway amino-acid biosynthesis; L-histidine biosynthesis; L-histidine from 5-phospho-alpha-D-ribose 1-diphosphate: step 7/9. The polypeptide is Histidinol-phosphate aminotransferase (Yersinia pseudotuberculosis serotype O:1b (strain IP 31758)).